Reading from the N-terminus, the 394-residue chain is C-19 steroid 1alpha-hydroxylase (394 aa).

Heme b contacts are provided by histidine 81, arginine 85, arginine 281, glycine 335, histidine 338, and cysteine 340.

Belongs to the cytochrome P450 family. It depends on heme b as a cofactor.

The catalysed reaction is testosterone + 2 reduced [2Fe-2S]-[ferredoxin] + O2 + 2 H(+) = 1alpha-hydroxytestosterone + 2 oxidized [2Fe-2S]-[ferredoxin] + H2O. It carries out the reaction androst-4-ene-3,17-dione + 2 reduced [2Fe-2S]-[ferredoxin] + O2 + 2 H(+) = 1alpha-hydroxyandrost-4-ene-3,17-dione + 2 oxidized [2Fe-2S]-[ferredoxin] + H2O. Functionally, hydroxylase that can catalyze the in vitro conversion of the sesquiterpenoid nootkatone, a natural organic compound produced by some plants, to at least five hydrophilic products. The native ferredoxin reductase FdR_B and either Fdx2 or Fdx8 ferredoxins can act as the redox partners for the conversion of nootkatone. In terms of biological role, in addition, acts as a steroid 1alpha-hydroxylase, when associated in vitro with the surrogate redox partners bovine adrenodoxin (Adx) and adrenodoxin reductase (Adr). Acts on several C-19 steroid substrates, including testosterone and androstenedione, which are hydroxylated to 1alpha-hydroxytestosterone and 1alpha-hydroxyandrostenedione, respectively. Can use their derivatives testosterone-acetate and 11-oxoandrostenedione, but not vitamin D3 and 25-hydroxyvitamin D3. Also catalyzes the hydroxylation of the C-21 steroid 11-deoxycorticosterone to 1alpha-hydroxy-11-deoxycorticosterone. Catalyzes the hydroxylation of the C-21 steroid progesterone, leading to the formation of seven products: two major (1alpha-hydroxyprogesterone and 17alpha-hydroxyprogesterone) and five minor products. This is C-19 steroid 1alpha-hydroxylase from Sorangium cellulosum (strain So ce56) (Polyangium cellulosum (strain So ce56)).